Here is a 402-residue protein sequence, read N- to C-terminus: Pyruvate synthase subunit PorA (402 aa).

Heterotetramer of one alpha, one beta, one delta and one gamma chain.

It catalyses the reaction 2 oxidized [2Fe-2S]-[ferredoxin] + pyruvate + CoA = 2 reduced [2Fe-2S]-[ferredoxin] + acetyl-CoA + CO2 + H(+). This Methanosarcina barkeri (strain Fusaro / DSM 804) protein is Pyruvate synthase subunit PorA (porA).